Reading from the N-terminus, the 346-residue chain is Holliday junction branch migration complex subunit RuvB (346 aa).

The interval 1–182 (MSEPARLISP…FGIPVRLSFY (182 aa)) is large ATPase domain (RuvB-L). Residues L21, R22, G63, K66, T67, T68, 129 to 131 (EDF), R172, Y182, and R219 contribute to the ATP site. Residue T67 coordinates Mg(2+). Positions 183-253 (TVEELELIVR…IADEALTRLL (71 aa)) are small ATPAse domain (RuvB-S). Residues 256 to 346 (NVGFDQLDKR…AQFRLFQEDN (91 aa)) are head domain (RuvB-H). 3 residues coordinate DNA: R292, R311, and R316.

Belongs to the RuvB family. As to quaternary structure, homohexamer. Forms an RuvA(8)-RuvB(12)-Holliday junction (HJ) complex. HJ DNA is sandwiched between 2 RuvA tetramers; dsDNA enters through RuvA and exits via RuvB. An RuvB hexamer assembles on each DNA strand where it exits the tetramer. Each RuvB hexamer is contacted by two RuvA subunits (via domain III) on 2 adjacent RuvB subunits; this complex drives branch migration. In the full resolvosome a probable DNA-RuvA(4)-RuvB(12)-RuvC(2) complex forms which resolves the HJ.

The protein localises to the cytoplasm. The enzyme catalyses ATP + H2O = ADP + phosphate + H(+). In terms of biological role, the RuvA-RuvB-RuvC complex processes Holliday junction (HJ) DNA during genetic recombination and DNA repair, while the RuvA-RuvB complex plays an important role in the rescue of blocked DNA replication forks via replication fork reversal (RFR). RuvA specifically binds to HJ cruciform DNA, conferring on it an open structure. The RuvB hexamer acts as an ATP-dependent pump, pulling dsDNA into and through the RuvAB complex. RuvB forms 2 homohexamers on either side of HJ DNA bound by 1 or 2 RuvA tetramers; 4 subunits per hexamer contact DNA at a time. Coordinated motions by a converter formed by DNA-disengaged RuvB subunits stimulates ATP hydrolysis and nucleotide exchange. Immobilization of the converter enables RuvB to convert the ATP-contained energy into a lever motion, pulling 2 nucleotides of DNA out of the RuvA tetramer per ATP hydrolyzed, thus driving DNA branch migration. The RuvB motors rotate together with the DNA substrate, which together with the progressing nucleotide cycle form the mechanistic basis for DNA recombination by continuous HJ branch migration. Branch migration allows RuvC to scan DNA until it finds its consensus sequence, where it cleaves and resolves cruciform DNA. The protein is Holliday junction branch migration complex subunit RuvB of Rhizobium johnstonii (strain DSM 114642 / LMG 32736 / 3841) (Rhizobium leguminosarum bv. viciae).